A 162-amino-acid chain; its full sequence is NADH-quinone oxidoreductase subunit C (162 aa).

It belongs to the complex I 30 kDa subunit family. As to quaternary structure, NDH-1 is composed of 14 different subunits. Subunits NuoB, C, D, E, F, and G constitute the peripheral sector of the complex.

Its subcellular location is the cell inner membrane. It catalyses the reaction a quinone + NADH + 5 H(+)(in) = a quinol + NAD(+) + 4 H(+)(out). In terms of biological role, NDH-1 shuttles electrons from NADH, via FMN and iron-sulfur (Fe-S) centers, to quinones in the respiratory chain. The immediate electron acceptor for the enzyme in this species is believed to be ubiquinone. Couples the redox reaction to proton translocation (for every two electrons transferred, four hydrogen ions are translocated across the cytoplasmic membrane), and thus conserves the redox energy in a proton gradient. This chain is NADH-quinone oxidoreductase subunit C, found in Geobacter metallireducens (strain ATCC 53774 / DSM 7210 / GS-15).